Here is a 174-residue protein sequence, read N- to C-terminus: uncharacterized protein (174 aa).

The disordered stretch occupies residues arginine 153–glycine 174.

This is an uncharacterized protein from Sinorhizobium fredii (strain NBRC 101917 / NGR234).